The sequence spans 238 residues: Deoxyribose-phosphate aldolase (238 aa).

Asp-104 serves as the catalytic Proton donor/acceptor. Lys-168 acts as the Schiff-base intermediate with acetaldehyde in catalysis. Lys-197 functions as the Proton donor/acceptor in the catalytic mechanism.

Belongs to the DeoC/FbaB aldolase family. DeoC type 1 subfamily.

Its subcellular location is the cytoplasm. It carries out the reaction 2-deoxy-D-ribose 5-phosphate = D-glyceraldehyde 3-phosphate + acetaldehyde. It participates in carbohydrate degradation; 2-deoxy-D-ribose 1-phosphate degradation; D-glyceraldehyde 3-phosphate and acetaldehyde from 2-deoxy-alpha-D-ribose 1-phosphate: step 2/2. Catalyzes a reversible aldol reaction between acetaldehyde and D-glyceraldehyde 3-phosphate to generate 2-deoxy-D-ribose 5-phosphate. This is Deoxyribose-phosphate aldolase from Bacteroides thetaiotaomicron (strain ATCC 29148 / DSM 2079 / JCM 5827 / CCUG 10774 / NCTC 10582 / VPI-5482 / E50).